The sequence spans 340 residues: Ketol-acid reductoisomerase (NADP(+)) (340 aa).

One can recognise a KARI N-terminal Rossmann domain in the interval 1–182 (MRVYYDRDCD…GGGRSGIIET (182 aa)). NADP(+)-binding positions include 24–27 (YGSQ), arginine 48, serine 51, serine 53, and 83–86 (DELQ). The active site involves histidine 108. NADP(+) is bound at residue glycine 134. Residues 183–329 (NFRQECETDL…EKLRGMMPWI (147 aa)) enclose the KARI C-terminal knotted domain. The Mg(2+) site is built by aspartate 191, glutamate 195, glutamate 227, and glutamate 231. Serine 252 contributes to the substrate binding site.

The protein belongs to the ketol-acid reductoisomerase family. Requires Mg(2+) as cofactor.

The catalysed reaction is (2R)-2,3-dihydroxy-3-methylbutanoate + NADP(+) = (2S)-2-acetolactate + NADPH + H(+). The enzyme catalyses (2R,3R)-2,3-dihydroxy-3-methylpentanoate + NADP(+) = (S)-2-ethyl-2-hydroxy-3-oxobutanoate + NADPH + H(+). The protein operates within amino-acid biosynthesis; L-isoleucine biosynthesis; L-isoleucine from 2-oxobutanoate: step 2/4. Its pathway is amino-acid biosynthesis; L-valine biosynthesis; L-valine from pyruvate: step 2/4. Functionally, involved in the biosynthesis of branched-chain amino acids (BCAA). Catalyzes an alkyl-migration followed by a ketol-acid reduction of (S)-2-acetolactate (S2AL) to yield (R)-2,3-dihydroxy-isovalerate. In the isomerase reaction, S2AL is rearranged via a Mg-dependent methyl migration to produce 3-hydroxy-3-methyl-2-ketobutyrate (HMKB). In the reductase reaction, this 2-ketoacid undergoes a metal-dependent reduction by NADPH to yield (R)-2,3-dihydroxy-isovalerate. The sequence is that of Ketol-acid reductoisomerase (NADP(+)) from Cereibacter sphaeroides (strain ATCC 17025 / ATH 2.4.3) (Rhodobacter sphaeroides).